The primary structure comprises 728 residues: Polyribonucleotide nucleotidyltransferase (728 aa).

Mg(2+) contacts are provided by Asp513 and Asp519. Residues 580–640 (PKVKMILIKP…EIVDLTVTYI (61 aa)) form the KH domain. The S1 motif domain occupies 650–724 (ENVYEVKILR…ERGQIDLSKK (75 aa)).

Belongs to the polyribonucleotide nucleotidyltransferase family. Mg(2+) serves as cofactor.

The protein localises to the cytoplasm. It carries out the reaction RNA(n+1) + phosphate = RNA(n) + a ribonucleoside 5'-diphosphate. Functionally, involved in mRNA degradation. Catalyzes the phosphorolysis of single-stranded polyribonucleotides processively in the 3'- to 5'-direction. This Phytoplasma mali (strain AT) protein is Polyribonucleotide nucleotidyltransferase.